We begin with the raw amino-acid sequence, 339 residues long: tRNA N6-adenosine threonylcarbamoyltransferase (339 aa).

Histidine 111 and histidine 115 together coordinate Fe cation. Substrate contacts are provided by residues leucine 134–glycine 138, aspartate 167, glycine 180, and asparagine 272. Aspartate 300 is a binding site for Fe cation.

Belongs to the KAE1 / TsaD family. The cofactor is Fe(2+).

Its subcellular location is the cytoplasm. The enzyme catalyses L-threonylcarbamoyladenylate + adenosine(37) in tRNA = N(6)-L-threonylcarbamoyladenosine(37) in tRNA + AMP + H(+). Required for the formation of a threonylcarbamoyl group on adenosine at position 37 (t(6)A37) in tRNAs that read codons beginning with adenine. Is involved in the transfer of the threonylcarbamoyl moiety of threonylcarbamoyl-AMP (TC-AMP) to the N6 group of A37, together with TsaE and TsaB. TsaD likely plays a direct catalytic role in this reaction. The sequence is that of tRNA N6-adenosine threonylcarbamoyltransferase from Vibrio vulnificus (strain YJ016).